A 361-amino-acid chain; its full sequence is Phospho-N-acetylmuramoyl-pentapeptide-transferase (361 aa).

Transmembrane regions (helical) follow at residues 27–47, 70–90, 97–117, 134–154, 167–187, 199–219, 236–256, 263–283, 288–308, and 338–358; these read ILAS…MIRW, GTPT…CLLW, SLWL…VDDY, YFWQ…NASL, TVTW…IVGS, GLAI…AYAS, TGEL…FLWY, VFMG…VAVV, LVLL…ILQV, and KVIV…LATL.

This sequence belongs to the glycosyltransferase 4 family. MraY subfamily. Requires Mg(2+) as cofactor.

The protein localises to the cell inner membrane. The catalysed reaction is UDP-N-acetyl-alpha-D-muramoyl-L-alanyl-gamma-D-glutamyl-meso-2,6-diaminopimeloyl-D-alanyl-D-alanine + di-trans,octa-cis-undecaprenyl phosphate = di-trans,octa-cis-undecaprenyl diphospho-N-acetyl-alpha-D-muramoyl-L-alanyl-D-glutamyl-meso-2,6-diaminopimeloyl-D-alanyl-D-alanine + UMP. It functions in the pathway cell wall biogenesis; peptidoglycan biosynthesis. In terms of biological role, catalyzes the initial step of the lipid cycle reactions in the biosynthesis of the cell wall peptidoglycan: transfers peptidoglycan precursor phospho-MurNAc-pentapeptide from UDP-MurNAc-pentapeptide onto the lipid carrier undecaprenyl phosphate, yielding undecaprenyl-pyrophosphoryl-MurNAc-pentapeptide, known as lipid I. The chain is Phospho-N-acetylmuramoyl-pentapeptide-transferase from Legionella pneumophila (strain Lens).